The sequence spans 1007 residues: Zinc finger CCCH domain-containing protein 4 (1007 aa).

Residues 28–192 (VEKVKGNRVT…FRDLGRGERV (165 aa)) form the Helicase ATP-binding domain. 41–48 (GDTGCGKS) serves as a coordination point for ATP. The DEAH box motif lies at 139 to 142 (DEIH). The 171-residue stretch at 250 to 420 (LIHRLLLHIH…EQVLMICCAE (171 aa)) folds into the Helicase C-terminal domain. C3H1-type zinc fingers lie at residues 723–750 (ALEN…HSSR) and 751–778 (APRP…HDSG).

This chain is Zinc finger CCCH domain-containing protein 4, found in Oryza sativa subsp. japonica (Rice).